Reading from the N-terminus, the 444-residue chain is Tubulin beta-4 chain (444 aa).

Positions 11, 69, 138, 142, 143, 144, 204, and 226 each coordinate GTP. Mg(2+) is bound at residue Glu69.

The protein belongs to the tubulin family. As to quaternary structure, dimer of alpha and beta chains. A typical microtubule is a hollow water-filled tube with an outer diameter of 25 nm and an inner diameter of 15 nM. Alpha-beta heterodimers associate head-to-tail to form protofilaments running lengthwise along the microtubule wall with the beta-tubulin subunit facing the microtubule plus end conferring a structural polarity. Microtubules usually have 13 protofilaments but different protofilament numbers can be found in some organisms and specialized cells. Requires Mg(2+) as cofactor.

Its subcellular location is the cytoplasm. The protein resides in the cytoskeleton. Its function is as follows. Tubulin is the major constituent of microtubules, a cylinder consisting of laterally associated linear protofilaments composed of alpha- and beta-tubulin heterodimers. Microtubules grow by the addition of GTP-tubulin dimers to the microtubule end, where a stabilizing cap forms. Below the cap, tubulin dimers are in GDP-bound state, owing to GTPase activity of alpha-tubulin. The polypeptide is Tubulin beta-4 chain (TUBB4) (Arabidopsis thaliana (Mouse-ear cress)).